Here is a 348-residue protein sequence, read N- to C-terminus: Anthranilate phosphoribosyltransferase (348 aa).

5-phospho-alpha-D-ribose 1-diphosphate is bound by residues G91, 94 to 95, T99, 101 to 104, 119 to 127, and S131; these read GD, NIST, and KHGNRSASG. G91 contributes to the anthranilate binding site. A Mg(2+)-binding site is contributed by S103. N122 lines the anthranilate pocket. R177 contributes to the anthranilate binding site. Residues D236 and E237 each coordinate Mg(2+).

Belongs to the anthranilate phosphoribosyltransferase family. As to quaternary structure, homodimer. The cofactor is Mg(2+).

It carries out the reaction N-(5-phospho-beta-D-ribosyl)anthranilate + diphosphate = 5-phospho-alpha-D-ribose 1-diphosphate + anthranilate. It participates in amino-acid biosynthesis; L-tryptophan biosynthesis; L-tryptophan from chorismate: step 2/5. Catalyzes the transfer of the phosphoribosyl group of 5-phosphorylribose-1-pyrophosphate (PRPP) to anthranilate to yield N-(5'-phosphoribosyl)-anthranilate (PRA). This Synechococcus elongatus (strain ATCC 33912 / PCC 7942 / FACHB-805) (Anacystis nidulans R2) protein is Anthranilate phosphoribosyltransferase.